Here is a 245-residue protein sequence, read N- to C-terminus: 1-(5-phosphoribosyl)-5-[(5-phosphoribosylamino)methylideneamino] imidazole-4-carboxamide isomerase (245 aa).

Aspartate 7 functions as the Proton acceptor in the catalytic mechanism. Aspartate 129 functions as the Proton donor in the catalytic mechanism.

The protein belongs to the HisA/HisF family.

The protein localises to the cytoplasm. It catalyses the reaction 1-(5-phospho-beta-D-ribosyl)-5-[(5-phospho-beta-D-ribosylamino)methylideneamino]imidazole-4-carboxamide = 5-[(5-phospho-1-deoxy-D-ribulos-1-ylimino)methylamino]-1-(5-phospho-beta-D-ribosyl)imidazole-4-carboxamide. It participates in amino-acid biosynthesis; L-histidine biosynthesis; L-histidine from 5-phospho-alpha-D-ribose 1-diphosphate: step 4/9. This Escherichia coli O45:K1 (strain S88 / ExPEC) protein is 1-(5-phosphoribosyl)-5-[(5-phosphoribosylamino)methylideneamino] imidazole-4-carboxamide isomerase.